The chain runs to 320 residues: Olfactory receptor 5C1 (320 aa).

The Extracellular segment spans residues 1 to 29 (MNSENLTRAAVAPAEFVLLGITNRWDLRV). The N-linked (GlcNAc...) asparagine glycan is linked to N5. A helical transmembrane segment spans residues 30–50 (ALFLTCLPVYLVSLLGNMGMA). Over 51-58 (LLIRMDAR) the chain is Cytoplasmic. The chain crosses the membrane as a helical span at residues 59 to 79 (LHTPMYFFLANLSLLDACYSS). The Extracellular portion of the chain corresponds to 80-103 (AIGPKMLVDLLLPRATIPYTACAL). C101 and C193 are oxidised to a cystine. Residues 104 to 124 (QMFVFAGLADTECCLLAAMAY) traverse the membrane as a helical segment. The Cytoplasmic segment spans residues 125–143 (DRYVAIRNPLLYTTAMSQR). The chain crosses the membrane as a helical span at residues 144-164 (LCLALLGASGLGGAVSAFVHT). Over 165 to 200 (TLTFRLSFCRSRKINSFFCDIPPLLAISCSDTSLNE) the chain is Extracellular. Residues 201–221 (LLLFAICGFIQTATVLAITVS) form a helical membrane-spanning segment. Residues 222–241 (YGFIAGAVIHMRSVEGSRRA) lie on the Cytoplasmic side of the membrane. A helical transmembrane segment spans residues 242-262 (ASTGGSHLTAVAMMYGTLIFM). The Extracellular portion of the chain corresponds to 263–275 (YLRPSSSYALDTD). The chain crosses the membrane as a helical span at residues 276–296 (KMASVFYTLVIPSLNPLIYSL). The Cytoplasmic segment spans residues 297-320 (RNKEVKEALRQTWSRFHCPGQGSQ).

The protein belongs to the G-protein coupled receptor 1 family.

It is found in the cell membrane. Odorant receptor. This Homo sapiens (Human) protein is Olfactory receptor 5C1 (OR5C1).